The following is a 352-amino-acid chain: Protein RecA (352 aa).

Position 65–72 (glycine 65–threonine 72) interacts with ATP. The disordered stretch occupies residues valine 333–isoleucine 352. Positions glutamate 343 to isoleucine 352 are enriched in acidic residues.

It belongs to the RecA family.

It localises to the cytoplasm. In terms of biological role, can catalyze the hydrolysis of ATP in the presence of single-stranded DNA, the ATP-dependent uptake of single-stranded DNA by duplex DNA, and the ATP-dependent hybridization of homologous single-stranded DNAs. It interacts with LexA causing its activation and leading to its autocatalytic cleavage. The sequence is that of Protein RecA from Pseudomonas fluorescens.